Here is a 140-residue protein sequence, read N- to C-terminus: Nucleoside diphosphate kinase (140 aa).

6 residues coordinate ATP: lysine 11, phenylalanine 59, arginine 87, threonine 93, arginine 104, and asparagine 114. Histidine 117 serves as the catalytic Pros-phosphohistidine intermediate.

It belongs to the NDK family. In terms of assembly, homotetramer. Mg(2+) is required as a cofactor.

It is found in the cytoplasm. It catalyses the reaction a 2'-deoxyribonucleoside 5'-diphosphate + ATP = a 2'-deoxyribonucleoside 5'-triphosphate + ADP. The enzyme catalyses a ribonucleoside 5'-diphosphate + ATP = a ribonucleoside 5'-triphosphate + ADP. In terms of biological role, major role in the synthesis of nucleoside triphosphates other than ATP. The ATP gamma phosphate is transferred to the NDP beta phosphate via a ping-pong mechanism, using a phosphorylated active-site intermediate. This chain is Nucleoside diphosphate kinase, found in Agrobacterium fabrum (strain C58 / ATCC 33970) (Agrobacterium tumefaciens (strain C58)).